The chain runs to 155 residues: Large ribosomal subunit protein uL13 (155 aa).

It belongs to the universal ribosomal protein uL13 family. In terms of assembly, part of the 50S ribosomal subunit.

This protein is one of the early assembly proteins of the 50S ribosomal subunit, although it is not seen to bind rRNA by itself. It is important during the early stages of 50S assembly. The protein is Large ribosomal subunit protein uL13 of Rickettsia rickettsii (strain Iowa).